The sequence spans 453 residues: Transcription factor bHLH110 (453 aa).

2 disordered regions span residues 1–37 (MDSANLHQLQDQLQLVGSSSSSSSLDNNSDPSCYGAS) and 177–197 (SSLPSSSSSSSPSSQSHRGNF). Composition is skewed to low complexity over residues 8-32 (QLQDQLQLVGSSSSSSSLDNNSDPS) and 177-192 (SSLPSSSSSSSPSSQS). The bHLH domain maps to 322–371 (VESRSSCPPFKVRKEKLGDRIAALQQLVSPFGKTDTASVLMEAIGYIKFL). Positions 386-411 (SRNRPGKASQLVSQSQEGDEEETRDL) are disordered.

In terms of assembly, homodimer.

Its subcellular location is the nucleus. The sequence is that of Transcription factor bHLH110 (BHLH110) from Arabidopsis thaliana (Mouse-ear cress).